We begin with the raw amino-acid sequence, 146 residues long: Large ribosomal subunit protein uL15 (146 aa).

Over residues 1 to 18 the composition is skewed to basic and acidic residues; the sequence is MKLHELKPSEGSRKERNR. The tract at residues 1 to 50 is disordered; the sequence is MKLHELKPSEGSRKERNRVGRGTGSGNGKTSGRGHKGQKARSGGGVRLGF. Gly residues predominate over residues 21–31; that stretch reads RGTGSGNGKTS.

Belongs to the universal ribosomal protein uL15 family. Part of the 50S ribosomal subunit.

In terms of biological role, binds to the 23S rRNA. This chain is Large ribosomal subunit protein uL15, found in Listeria innocua serovar 6a (strain ATCC BAA-680 / CLIP 11262).